A 361-amino-acid chain; its full sequence is Fructose-1,6-bisphosphatase class 1 2 (361 aa).

Glu110, Asp134, Leu136, and Asp137 together coordinate Mg(2+). Substrate contacts are provided by residues Asp137 to Ser140, Asn231, Tyr264, and Lys294. Residue Glu300 coordinates Mg(2+).

Belongs to the FBPase class 1 family. Homotetramer. The cofactor is Mg(2+).

Its subcellular location is the cytoplasm. The catalysed reaction is beta-D-fructose 1,6-bisphosphate + H2O = beta-D-fructose 6-phosphate + phosphate. The protein operates within carbohydrate biosynthesis; gluconeogenesis. This Salinibacter ruber (strain DSM 13855 / M31) protein is Fructose-1,6-bisphosphatase class 1 2.